A 230-amino-acid polypeptide reads, in one-letter code: tRNA pseudouridine synthase B (230 aa).

Asp45 acts as the Nucleophile in catalysis.

Belongs to the pseudouridine synthase TruB family. Type 1 subfamily.

It catalyses the reaction uridine(55) in tRNA = pseudouridine(55) in tRNA. Responsible for synthesis of pseudouridine from uracil-55 in the psi GC loop of transfer RNAs. The protein is tRNA pseudouridine synthase B of Endomicrobium trichonymphae.